The primary structure comprises 172 residues: Peptidyl-tRNA hydrolase (172 aa).

Tyr-10 contributes to the tRNA binding site. The Proton acceptor role is filled by His-15. TRNA-binding residues include Phe-59, Asn-61, and Asn-101.

It belongs to the PTH family. Monomer.

It is found in the cytoplasm. It catalyses the reaction an N-acyl-L-alpha-aminoacyl-tRNA + H2O = an N-acyl-L-amino acid + a tRNA + H(+). Hydrolyzes ribosome-free peptidyl-tRNAs (with 1 or more amino acids incorporated), which drop off the ribosome during protein synthesis, or as a result of ribosome stalling. Its function is as follows. Catalyzes the release of premature peptidyl moieties from peptidyl-tRNA molecules trapped in stalled 50S ribosomal subunits, and thus maintains levels of free tRNAs and 50S ribosomes. The chain is Peptidyl-tRNA hydrolase from Rubrobacter xylanophilus (strain DSM 9941 / JCM 11954 / NBRC 16129 / PRD-1).